The primary structure comprises 202 residues: Small ribosomal subunit protein uS4c (202 aa).

The S4 RNA-binding domain maps to Met90 to Ile153.

This sequence belongs to the universal ribosomal protein uS4 family. As to quaternary structure, part of the 30S ribosomal subunit. Contacts protein S5. The interaction surface between S4 and S5 is involved in control of translational fidelity.

It localises to the plastid. The protein resides in the chloroplast. In terms of biological role, one of the primary rRNA binding proteins, it binds directly to 16S rRNA where it nucleates assembly of the body of the 30S subunit. Its function is as follows. With S5 and S12 plays an important role in translational accuracy. In Cyathophorum bulbosum (Moss), this protein is Small ribosomal subunit protein uS4c (rps4).